Reading from the N-terminus, the 177-residue chain is MIDDDGYRPNVGIVICNRQGQVMWARRYGQHSWQFPQGGINPGESPEQAMYRELFEEVGLRKKDVRVLASTRNWLRYKLPKRLVRWDTKPVCIGQKQKWFLLQLMCNESDINMQSSGTPEFDGWRWVSYWYPVRQVVSFKRDVYRRVMKEFISPVILLQESVAARVATPPSPRRKRG.

A Nudix hydrolase domain is found at 6–149; it reads GYRPNVGIVI…KRDVYRRVMK (144 aa). Positions 38–59 match the Nudix box motif; it reads GGINPGESPEQAMYRELFEEVG.

Belongs to the Nudix hydrolase family. RppH subfamily. Requires a divalent metal cation as cofactor.

Accelerates the degradation of transcripts by removing pyrophosphate from the 5'-end of triphosphorylated RNA, leading to a more labile monophosphorylated state that can stimulate subsequent ribonuclease cleavage. This is RNA pyrophosphohydrolase from Pectobacterium atrosepticum (strain SCRI 1043 / ATCC BAA-672) (Erwinia carotovora subsp. atroseptica).